A 438-amino-acid chain; its full sequence is 23S rRNA (uracil(1939)-C(5))-methyltransferase RlmD (438 aa).

Residues 10–69 (KASVNTKHLSVDVVRLDHNSAGIAFVDKKPVFIEGALPEEQAIIQFIEQKKQYSRAKLIK) form the TRAM domain. Residues Cys-82, Cys-88, Cys-91, and Cys-169 each coordinate [4Fe-4S] cluster. Residues Gln-272, Phe-301, Asn-306, Glu-322, Asn-349, and Asp-370 each coordinate S-adenosyl-L-methionine. The active-site Nucleophile is the Cys-396.

Belongs to the class I-like SAM-binding methyltransferase superfamily. RNA M5U methyltransferase family. RlmD subfamily.

It catalyses the reaction uridine(1939) in 23S rRNA + S-adenosyl-L-methionine = 5-methyluridine(1939) in 23S rRNA + S-adenosyl-L-homocysteine + H(+). In terms of biological role, catalyzes the formation of 5-methyl-uridine at position 1939 (m5U1939) in 23S rRNA. This is 23S rRNA (uracil(1939)-C(5))-methyltransferase RlmD from Aliivibrio salmonicida (strain LFI1238) (Vibrio salmonicida (strain LFI1238)).